Here is a 306-residue protein sequence, read N- to C-terminus: Ribonuclease Z (306 aa).

Zn(2+) is bound by residues histidine 63, histidine 65, aspartate 67, histidine 68, histidine 141, aspartate 208, and histidine 266. Catalysis depends on aspartate 67, which acts as the Proton acceptor.

It belongs to the RNase Z family. Homodimer. Zn(2+) is required as a cofactor.

It catalyses the reaction Endonucleolytic cleavage of RNA, removing extra 3' nucleotides from tRNA precursor, generating 3' termini of tRNAs. A 3'-hydroxy group is left at the tRNA terminus and a 5'-phosphoryl group is left at the trailer molecule.. In terms of biological role, zinc phosphodiesterase, which displays some tRNA 3'-processing endonuclease activity. Probably involved in tRNA maturation, by removing a 3'-trailer from precursor tRNA. The sequence is that of Ribonuclease Z from Chlamydia abortus (strain DSM 27085 / S26/3) (Chlamydophila abortus).